A 332-amino-acid polypeptide reads, in one-letter code: Spherulin-4 (332 aa).

The first 22 residues, 1–22, serve as a signal peptide directing secretion; it reads MNIKIVVLVIFAILLGSALAWH. Positions 26–60 are disordered; the sequence is HHNPTKAPTEAPHRGGGGGGGHNTPAPTQPPRQNT.

The protein is Spherulin-4 of Physarum polycephalum (Slime mold).